Here is a 168-residue protein sequence, read N- to C-terminus: Endoribonuclease YbeY (168 aa).

3 residues coordinate Zn(2+): H119, H123, and H129.

The protein belongs to the endoribonuclease YbeY family. Zn(2+) is required as a cofactor.

It is found in the cytoplasm. In terms of biological role, single strand-specific metallo-endoribonuclease involved in late-stage 70S ribosome quality control and in maturation of the 3' terminus of the 16S rRNA. This Gluconobacter oxydans (strain 621H) (Gluconobacter suboxydans) protein is Endoribonuclease YbeY.